The chain runs to 201 residues: Urease accessory protein UreG (201 aa).

Position 12-19 (12-19) interacts with GTP; the sequence is GPVGSGKT.

It belongs to the SIMIBI class G3E GTPase family. UreG subfamily. As to quaternary structure, homodimer. UreD, UreF and UreG form a complex that acts as a GTP-hydrolysis-dependent molecular chaperone, activating the urease apoprotein by helping to assemble the nickel containing metallocenter of UreC. The UreE protein probably delivers the nickel.

It is found in the cytoplasm. Its function is as follows. Facilitates the functional incorporation of the urease nickel metallocenter. This process requires GTP hydrolysis, probably effectuated by UreG. In Dechloromonas aromatica (strain RCB), this protein is Urease accessory protein UreG.